The following is a 171-amino-acid chain: Ribosome maturation factor RimM (171 aa).

In terms of domain architecture, PRC barrel spans 97–170 (EGEYYYHEVI…QVTIHVMEGL (74 aa)).

Belongs to the RimM family. In terms of assembly, binds ribosomal protein uS19.

The protein resides in the cytoplasm. An accessory protein needed during the final step in the assembly of 30S ribosomal subunit, possibly for assembly of the head region. Essential for efficient processing of 16S rRNA. May be needed both before and after RbfA during the maturation of 16S rRNA. It has affinity for free ribosomal 30S subunits but not for 70S ribosomes. This chain is Ribosome maturation factor RimM, found in Bacillus cytotoxicus (strain DSM 22905 / CIP 110041 / 391-98 / NVH 391-98).